The following is a 333-amino-acid chain: Ribosomal RNA small subunit methyltransferase H (333 aa).

S-adenosyl-L-methionine is bound by residues 34-36, D59, F86, D112, and Q119; that span reads GGH.

This sequence belongs to the methyltransferase superfamily. RsmH family.

Its subcellular location is the cytoplasm. It carries out the reaction cytidine(1402) in 16S rRNA + S-adenosyl-L-methionine = N(4)-methylcytidine(1402) in 16S rRNA + S-adenosyl-L-homocysteine + H(+). Its function is as follows. Specifically methylates the N4 position of cytidine in position 1402 (C1402) of 16S rRNA. The sequence is that of Ribosomal RNA small subunit methyltransferase H from Prosthecochloris aestuarii (strain DSM 271 / SK 413).